The following is a 218-amino-acid chain: Serine/threonine-protein phosphatase 2 (218 aa).

The Mn(2+) site is built by Asp22, His24, Asp51, and Asn77. The Proton donor role is filled by His78. His187 lines the Mn(2+) pocket.

Belongs to the PPP phosphatase family. The cofactor is Mn(2+).

The catalysed reaction is O-phospho-L-seryl-[protein] + H2O = L-seryl-[protein] + phosphate. The enzyme catalyses O-phospho-L-threonyl-[protein] + H2O = L-threonyl-[protein] + phosphate. Has been shown, in vitro, to act on Ser, Thr and Tyr-phosphorylated substrates. The polypeptide is Serine/threonine-protein phosphatase 2 (pphB) (Escherichia coli (strain K12)).